Reading from the N-terminus, the 621-residue chain is tRNA uridine 5-carboxymethylaminomethyl modification enzyme MnmG (621 aa).

Residue 9–14 (GGGHAG) coordinates FAD. Residue 268–282 (GPRYCPSIEDKINRF) coordinates NAD(+).

This sequence belongs to the MnmG family. As to quaternary structure, homodimer. Heterotetramer of two MnmE and two MnmG subunits. The cofactor is FAD.

The protein resides in the cytoplasm. Functionally, NAD-binding protein involved in the addition of a carboxymethylaminomethyl (cmnm) group at the wobble position (U34) of certain tRNAs, forming tRNA-cmnm(5)s(2)U34. This chain is tRNA uridine 5-carboxymethylaminomethyl modification enzyme MnmG, found in Campylobacter fetus subsp. fetus (strain 82-40).